The sequence spans 309 residues: Porphobilinogen deaminase (309 aa).

Cysteine 244 is modified (S-(dipyrrolylmethanemethyl)cysteine).

The protein belongs to the HMBS family. In terms of assembly, monomer. Dipyrromethane is required as a cofactor.

It carries out the reaction 4 porphobilinogen + H2O = hydroxymethylbilane + 4 NH4(+). Its pathway is porphyrin-containing compound metabolism; protoporphyrin-IX biosynthesis; coproporphyrinogen-III from 5-aminolevulinate: step 2/4. Tetrapolymerization of the monopyrrole PBG into the hydroxymethylbilane pre-uroporphyrinogen in several discrete steps. In Listeria monocytogenes serotype 4a (strain HCC23), this protein is Porphobilinogen deaminase.